We begin with the raw amino-acid sequence, 310 residues long: Thymidine kinase (310 aa).

17–24 (GPFGIGKT) serves as a coordination point for ATP. Glu-45 functions as the Proton acceptor in the catalytic mechanism. Residue Gln-86 coordinates substrate. Arg-176 contacts ATP. Arg-182 contacts substrate.

This sequence belongs to the herpesviridae thymidine kinase family. Homodimer.

The enzyme catalyses thymidine + ATP = dTMP + ADP + H(+). Catalyzes the transfer of the gamma-phospho group of ATP to thymidine to generate dTMP in the salvage pathway of pyrimidine synthesis. The dTMP serves as a substrate for DNA polymerase during viral DNA replication. Allows the virus to be reactivated and to grow in non-proliferative cells lacking a high concentration of phosphorylated nucleic acid precursors. The chain is Thymidine kinase from Gallus gallus (Chicken).